We begin with the raw amino-acid sequence, 276 residues long: 1-(5-phosphoribosyl)-5-[(5-phosphoribosylamino)methylideneamino] imidazole-4-carboxamide isomerase (276 aa).

It belongs to the HisA/HisF family.

Its subcellular location is the cytoplasm. It catalyses the reaction 1-(5-phospho-beta-D-ribosyl)-5-[(5-phospho-beta-D-ribosylamino)methylideneamino]imidazole-4-carboxamide = 5-[(5-phospho-1-deoxy-D-ribulos-1-ylimino)methylamino]-1-(5-phospho-beta-D-ribosyl)imidazole-4-carboxamide. The protein operates within amino-acid biosynthesis; L-histidine biosynthesis; L-histidine from 5-phospho-alpha-D-ribose 1-diphosphate: step 4/9. This Debaryomyces hansenii (strain ATCC 36239 / CBS 767 / BCRC 21394 / JCM 1990 / NBRC 0083 / IGC 2968) (Yeast) protein is 1-(5-phosphoribosyl)-5-[(5-phosphoribosylamino)methylideneamino] imidazole-4-carboxamide isomerase (HIS6).